The primary structure comprises 630 residues: MDEMATTQISKDELDELKEAFAKVDLNSNGFICDYELHELFKEANMPLPGYKVREIIQKLMLDGDRNKDGKISFNEFVYIFQEVKSSDIAKTFRKAINRKEGICALGGTSELSSEGTQHSYSEEEKYAFVNWINKALENDPDCRHVIPMNPNTDDLFKAVGDGIVLCKMINLSVPDTIDERAINKKKLTPFIIQENLNLALNSASAIGCHVVNIGAEDLRAGKPHLVLGLLWQIIKIGLFADIELSRNEALAALLRDGETLEELMKLSPEELLLRWANFHLENSGWQKINNFSADIKDSKAYFHLLNQIAPKGQKEGEPRIDINMSGFNETDDLKRAESMLQQADKLGCRQFVTPADVVSGNPKLNLAFVANLFNKYPALTKPENQDIDWTLLEGETREERTFRNWMNSLGVNPHVNHLYVDLQDALVILQLYERIKVPVDWSKVNKPPYPKLGANMKKLENCNYAVELGKNQAKFSLVGIGGQDLNDGNPTLTLAVVWQLMRRYTLNVMEDLGEGQKATDDIIVNWVNGTLSEAGKSTSIQSFKDKTISSSLAVVDLIDAIQPGCINYDLVKTGNLTEEDKHNNAKYAVSMARRIGARVYALPEDLVEVKPKMVMTVFACLMGRGMKSV.

2 consecutive EF-hand domains span residues 12–47 (DELD…ANMP) and 52–87 (KVRE…VKSS). 9 residues coordinate Ca(2+): aspartate 25, asparagine 27, asparagine 29, glutamate 36, aspartate 65, asparagine 67, aspartate 69, lysine 71, and glutamate 76. Actin-binding stretches follow at residues 109–382 (TSEL…ALTK) and 383–627 (PENQ…GRGM). Calponin-homology (CH) domains follow at residues 123–239 (EEEK…KIGL) and 267–378 (LSPE…NKYP). Phosphoserine occurs at positions 268, 293, 326, and 339. Residue threonine 391 is modified to Phosphothreonine. 2 Calponin-homology (CH) domains span residues 397–506 (TREE…RRYT) and 518–627 (KATD…GRGM).

As to quaternary structure, monomer.

The protein resides in the cytoplasm. Its function is as follows. Actin-bundling protein. This Rattus norvegicus (Rat) protein is Plastin-3 (Pls3).